Reading from the N-terminus, the 347-residue chain is GMP reductase (347 aa).

NADP(+) is bound at residue 108–131; it reads ADFEKTQQILSQNPQLNFVCIDVA. K(+) is bound by residues Gly-181 and Gly-183. Cys-186 acts as the Thioimidate intermediate in catalysis. Position 216–239 (216–239) interacts with NADP(+); the sequence is IISDGGCTMPGDVAKAFGGGADFV.

It belongs to the IMPDH/GMPR family. GuaC type 1 subfamily. As to quaternary structure, homotetramer.

The enzyme catalyses IMP + NH4(+) + NADP(+) = GMP + NADPH + 2 H(+). Catalyzes the irreversible NADPH-dependent deamination of GMP to IMP. It functions in the conversion of nucleobase, nucleoside and nucleotide derivatives of G to A nucleotides, and in maintaining the intracellular balance of A and G nucleotides. The chain is GMP reductase from Klebsiella pneumoniae subsp. pneumoniae (strain ATCC 700721 / MGH 78578).